A 97-amino-acid polypeptide reads, in one-letter code: MNKLLIGLVNVYKKFISPVLPPTCRYYPTCSTYMIDALKKHGAILGLIMGISRIIRCNPFIKGGVDPVPDYFTLRRNPHPERYEDEIIAQAFHSNKK.

This sequence belongs to the UPF0161 family.

The protein localises to the cell membrane. Functionally, could be involved in insertion of integral membrane proteins into the membrane. This is Putative membrane protein insertion efficiency factor from Lactobacillus gasseri (strain ATCC 33323 / DSM 20243 / BCRC 14619 / CIP 102991 / JCM 1131 / KCTC 3163 / NCIMB 11718 / NCTC 13722 / AM63).